The primary structure comprises 82 residues: MSCCGGNCGCGSGCQCGSGCGGCKMYPEMAEEVTTTQTVIMGVAPSKGHAEGLEAGAAAGAGAENGCKCGDNCTCNPCNCGK.

This sequence belongs to the metallothionein superfamily. Type 15 family. In terms of tissue distribution, expressed in stems, leaves, rachis, inflorescences and seeds.

Functionally, metallothioneins have a high content of cysteine residues that bind various heavy metals. The sequence is that of Metallothionein-like protein 2A (MT2A) from Oryza sativa subsp. japonica (Rice).